Here is a 410-residue protein sequence, read N- to C-terminus: LL-diaminopimelate aminotransferase (410 aa).

Residues tyrosine 15 and glycine 42 each coordinate substrate. Residues tyrosine 72, 108–109 (AK), tyrosine 132, asparagine 187, tyrosine 218, and 246–248 (SFS) contribute to the pyridoxal 5'-phosphate site. Substrate is bound by residues lysine 109, tyrosine 132, and asparagine 187. Position 249 is an N6-(pyridoxal phosphate)lysine (lysine 249). Pyridoxal 5'-phosphate-binding residues include arginine 257 and asparagine 292. Residues asparagine 292 and arginine 388 each coordinate substrate.

The protein belongs to the class-I pyridoxal-phosphate-dependent aminotransferase family. LL-diaminopimelate aminotransferase subfamily. Homodimer. Requires pyridoxal 5'-phosphate as cofactor.

It carries out the reaction (2S,6S)-2,6-diaminopimelate + 2-oxoglutarate = (S)-2,3,4,5-tetrahydrodipicolinate + L-glutamate + H2O + H(+). The protein operates within amino-acid biosynthesis; L-lysine biosynthesis via DAP pathway; LL-2,6-diaminopimelate from (S)-tetrahydrodipicolinate (aminotransferase route): step 1/1. Functionally, involved in the synthesis of meso-diaminopimelate (m-DAP or DL-DAP), required for both lysine and peptidoglycan biosynthesis. Catalyzes the direct conversion of tetrahydrodipicolinate to LL-diaminopimelate. This is LL-diaminopimelate aminotransferase from Picosynechococcus sp. (strain ATCC 27264 / PCC 7002 / PR-6) (Agmenellum quadruplicatum).